Consider the following 472-residue polypeptide: Siroheme synthase 2 (472 aa).

The segment at 1–204 is precorrin-2 dehydrogenase /sirohydrochlorin ferrochelatase; that stretch reads MDYFPIFCQL…EDQVQVEQHV (204 aa). NAD(+) is bound by residues 22–23 and 43–44; these read EV and CE. Residue Ser-128 is modified to Phosphoserine. A uroporphyrinogen-III C-methyltransferase region spans residues 216-472; that stretch reads GEVVLVGAGP…GMKEQVERVG (257 aa). S-adenosyl-L-methionine is bound at residue Pro-225. Catalysis depends on Asp-248, which acts as the Proton acceptor. Lys-270 (proton donor) is an active-site residue. Residues 301–303, Ile-306, 331–332, Met-382, and Gly-411 each bind S-adenosyl-L-methionine; these read GGD and TA.

In the N-terminal section; belongs to the precorrin-2 dehydrogenase / sirohydrochlorin ferrochelatase family. It in the C-terminal section; belongs to the precorrin methyltransferase family.

It carries out the reaction uroporphyrinogen III + 2 S-adenosyl-L-methionine = precorrin-2 + 2 S-adenosyl-L-homocysteine + H(+). It catalyses the reaction precorrin-2 + NAD(+) = sirohydrochlorin + NADH + 2 H(+). The catalysed reaction is siroheme + 2 H(+) = sirohydrochlorin + Fe(2+). It functions in the pathway cofactor biosynthesis; adenosylcobalamin biosynthesis; precorrin-2 from uroporphyrinogen III: step 1/1. Its pathway is cofactor biosynthesis; adenosylcobalamin biosynthesis; sirohydrochlorin from precorrin-2: step 1/1. The protein operates within porphyrin-containing compound metabolism; siroheme biosynthesis; precorrin-2 from uroporphyrinogen III: step 1/1. It participates in porphyrin-containing compound metabolism; siroheme biosynthesis; siroheme from sirohydrochlorin: step 1/1. It functions in the pathway porphyrin-containing compound metabolism; siroheme biosynthesis; sirohydrochlorin from precorrin-2: step 1/1. Multifunctional enzyme that catalyzes the SAM-dependent methylations of uroporphyrinogen III at position C-2 and C-7 to form precorrin-2 via precorrin-1. Then it catalyzes the NAD-dependent ring dehydrogenation of precorrin-2 to yield sirohydrochlorin. Finally, it catalyzes the ferrochelation of sirohydrochlorin to yield siroheme. This is Siroheme synthase 2 from Yersinia enterocolitica serotype O:8 / biotype 1B (strain NCTC 13174 / 8081).